The chain runs to 123 residues: Large ribosomal subunit protein bL20 (123 aa).

This sequence belongs to the bacterial ribosomal protein bL20 family.

In terms of biological role, binds directly to 23S ribosomal RNA and is necessary for the in vitro assembly process of the 50S ribosomal subunit. It is not involved in the protein synthesizing functions of that subunit. The chain is Large ribosomal subunit protein bL20 (rplT) from Chlamydia trachomatis serovar D (strain ATCC VR-885 / DSM 19411 / UW-3/Cx).